Consider the following 330-residue polypeptide: Putative protein N-methyltransferase FAM86B2 (330 aa).

Residue methionine 1 is modified to N-acetylmethionine. Residues tryptophan 139, 165–167, tryptophan 228, and alanine 247 each bind S-adenosyl-L-methionine; that span reads GSG.

It belongs to the class I-like SAM-binding methyltransferase superfamily. EEF2KMT family. In terms of assembly, interacts with EEF2KMT.

This chain is Putative protein N-methyltransferase FAM86B2 (FAM86B2), found in Homo sapiens (Human).